The following is a 525-amino-acid chain: NADH-quinone oxidoreductase subunit N (525 aa).

Helical transmembrane passes span 26–46 (LSPM…DAFA), 53–73 (VLQP…VVLL), 90–110 (PTLF…LLVA), 143–163 (VQTE…LFVA), 167–187 (LLVM…LCGL), 202–222 (YFLL…FAYG), 246–266 (LYLS…AAPF), 278–298 (PTPI…GALL), 314–334 (PVIW…ALTQ), 341–361 (LAYS…GSNI), 368–388 (MFYL…VSLV), 411–431 (LAGT…TSGF), 449–469 (LVVV…RVIV), and 487–507 (PTLT…LGVA).

The protein belongs to the complex I subunit 2 family. NDH-1 is composed of 14 different subunits. Subunits NuoA, H, J, K, L, M, N constitute the membrane sector of the complex.

It localises to the cell membrane. It catalyses the reaction a quinone + NADH + 5 H(+)(in) = a quinol + NAD(+) + 4 H(+)(out). Its function is as follows. NDH-1 shuttles electrons from NADH, via FMN and iron-sulfur (Fe-S) centers, to quinones in the respiratory chain. The immediate electron acceptor for the enzyme in this species is believed to be a menaquinone. Couples the redox reaction to proton translocation (for every two electrons transferred, four hydrogen ions are translocated across the cytoplasmic membrane), and thus conserves the redox energy in a proton gradient. This chain is NADH-quinone oxidoreductase subunit N, found in Parafrankia sp. (strain EAN1pec).